The chain runs to 851 residues: DNA mismatch repair protein MutS (851 aa).

614–621 (GPNMGGKS) contributes to the ATP binding site.

The protein belongs to the DNA mismatch repair MutS family.

Its function is as follows. This protein is involved in the repair of mismatches in DNA. It is possible that it carries out the mismatch recognition step. This protein has a weak ATPase activity. The protein is DNA mismatch repair protein MutS of Photorhabdus laumondii subsp. laumondii (strain DSM 15139 / CIP 105565 / TT01) (Photorhabdus luminescens subsp. laumondii).